Reading from the N-terminus, the 517-residue chain is Aspartyl/glutamyl-tRNA(Asn/Gln) amidotransferase subunit B (517 aa).

This sequence belongs to the GatB/GatE family. GatB subfamily. In terms of assembly, heterotrimer of A, B and C subunits.

The catalysed reaction is L-glutamyl-tRNA(Gln) + L-glutamine + ATP + H2O = L-glutaminyl-tRNA(Gln) + L-glutamate + ADP + phosphate + H(+). It carries out the reaction L-aspartyl-tRNA(Asn) + L-glutamine + ATP + H2O = L-asparaginyl-tRNA(Asn) + L-glutamate + ADP + phosphate + 2 H(+). Allows the formation of correctly charged Asn-tRNA(Asn) or Gln-tRNA(Gln) through the transamidation of misacylated Asp-tRNA(Asn) or Glu-tRNA(Gln) in organisms which lack either or both of asparaginyl-tRNA or glutaminyl-tRNA synthetases. The reaction takes place in the presence of glutamine and ATP through an activated phospho-Asp-tRNA(Asn) or phospho-Glu-tRNA(Gln). The protein is Aspartyl/glutamyl-tRNA(Asn/Gln) amidotransferase subunit B of Thermobifida fusca (strain YX).